Consider the following 254-residue polypeptide: uncharacterized protein (254 aa).

The protein belongs to the methyltransferase superfamily.

This is an uncharacterized protein from Mycobacterium bovis (strain ATCC BAA-935 / AF2122/97).